Consider the following 445-residue polypeptide: Probable D-serine dehydratase (445 aa).

K119 is modified (N6-(pyridoxal phosphate)lysine).

This sequence belongs to the serine/threonine dehydratase family. DsdA subfamily. The cofactor is pyridoxal 5'-phosphate.

The catalysed reaction is D-serine = pyruvate + NH4(+). This is Probable D-serine dehydratase from Pseudomonas putida (strain GB-1).